A 357-amino-acid polypeptide reads, in one-letter code: Guanine nucleotide-binding protein alpha-1 subunit (357 aa).

Gly2 carries N-myristoyl glycine lipidation. Residue Cys4 is the site of S-palmitoyl cysteine attachment. The 326-residue stretch at 32-357 folds into the G-alpha domain; the sequence is NVIKLLLLGA…SSKLKGCGLF (326 aa). The G1 motif stretch occupies residues 35–48; sequence KLLLLGAGESGKST. GTP contacts are provided by Glu43, Ser44, Gly45, Lys46, Ser47, Thr48, Asp151, Leu176, Thr182, Gly204, Asn270, Lys271, Asp273, and Ala329. Ser47 contributes to the Mg(2+) binding site. Residues 174–182 are G2 motif; the sequence is DILHTRVPT. Thr182 is a binding site for Mg(2+). Positions 197 to 206 are G3 motif; sequence FRVFDVGGQR. The segment at 266–273 is G4 motif; the sequence is ILFLNKVD. The segment at 327 to 332 is G5 motif; that stretch reads TCATDT.

Belongs to the G-alpha family. G(q) subfamily. In terms of assembly, g proteins are composed of 3 units; alpha, beta and gamma. The alpha chain contains the guanine nucleotide binding site. Mg(2+) is required as a cofactor.

In terms of biological role, guanine nucleotide-binding proteins (G proteins) are involved as modulators or transducers in various transmembrane signaling systems. This chain is Guanine nucleotide-binding protein alpha-1 subunit (gpa-1), found in Caenorhabditis briggsae.